Here is a 342-residue protein sequence, read N- to C-terminus: N-acetyl-gamma-glutamyl-phosphate reductase (342 aa).

C147 is a catalytic residue.

Belongs to the NAGSA dehydrogenase family. Type 1 subfamily.

It is found in the cytoplasm. The catalysed reaction is N-acetyl-L-glutamate 5-semialdehyde + phosphate + NADP(+) = N-acetyl-L-glutamyl 5-phosphate + NADPH + H(+). It participates in amino-acid biosynthesis; L-arginine biosynthesis; N(2)-acetyl-L-ornithine from L-glutamate: step 3/4. Catalyzes the NADPH-dependent reduction of N-acetyl-5-glutamyl phosphate to yield N-acetyl-L-glutamate 5-semialdehyde. The chain is N-acetyl-gamma-glutamyl-phosphate reductase from Campylobacter jejuni subsp. jejuni serotype O:2 (strain ATCC 700819 / NCTC 11168).